The primary structure comprises 482 residues: UDP-glycosyltransferase 86A2 (482 aa).

Residues Ser297, 355–357, 372–380, and 394–397 each bind UDP-alpha-D-glucose; these read CCQ, HCGWNSILE, and LTDQ.

Belongs to the UDP-glycosyltransferase family.

The protein is UDP-glycosyltransferase 86A2 (UGT86A2) of Arabidopsis thaliana (Mouse-ear cress).